Reading from the N-terminus, the 427-residue chain is Dihydroorotase (427 aa).

Zn(2+) is bound by residues histidine 60 and histidine 62. Substrate is bound by residues 62–64 and asparagine 94; that span reads HLR. Zn(2+)-binding residues include aspartate 151, histidine 178, and histidine 231. Asparagine 277 lines the substrate pocket. Aspartate 304 serves as a coordination point for Zn(2+). Aspartate 304 is an active-site residue. Substrate contacts are provided by residues histidine 308 and 322-323; that span reads FG.

This sequence belongs to the metallo-dependent hydrolases superfamily. DHOase family. Class I DHOase subfamily. Requires Zn(2+) as cofactor.

The enzyme catalyses (S)-dihydroorotate + H2O = N-carbamoyl-L-aspartate + H(+). The protein operates within pyrimidine metabolism; UMP biosynthesis via de novo pathway; (S)-dihydroorotate from bicarbonate: step 3/3. In terms of biological role, catalyzes the reversible cyclization of carbamoyl aspartate to dihydroorotate. The sequence is that of Dihydroorotase from Pelotomaculum thermopropionicum (strain DSM 13744 / JCM 10971 / SI).